Here is a 142-residue protein sequence, read N- to C-terminus: Deoxyuridine 5'-triphosphate nucleotidohydrolase (142 aa).

Residues 62–64 (RSG), N75, and 79–81 (TID) contribute to the substrate site.

It belongs to the dUTPase family. Mg(2+) is required as a cofactor.

It carries out the reaction dUTP + H2O = dUMP + diphosphate + H(+). It functions in the pathway pyrimidine metabolism; dUMP biosynthesis; dUMP from dCTP (dUTP route): step 2/2. In terms of biological role, this enzyme is involved in nucleotide metabolism: it produces dUMP, the immediate precursor of thymidine nucleotides and it decreases the intracellular concentration of dUTP so that uracil cannot be incorporated into DNA. The chain is Deoxyuridine 5'-triphosphate nucleotidohydrolase from Trichodesmium erythraeum (strain IMS101).